Consider the following 440-residue polypeptide: Thymidine phosphorylase (440 aa).

This sequence belongs to the thymidine/pyrimidine-nucleoside phosphorylase family. Homodimer.

The enzyme catalyses thymidine + phosphate = 2-deoxy-alpha-D-ribose 1-phosphate + thymine. It participates in pyrimidine metabolism; dTMP biosynthesis via salvage pathway; dTMP from thymine: step 1/2. The enzymes which catalyze the reversible phosphorolysis of pyrimidine nucleosides are involved in the degradation of these compounds and in their utilization as carbon and energy sources, or in the rescue of pyrimidine bases for nucleotide synthesis. The protein is Thymidine phosphorylase of Shigella dysenteriae serotype 1 (strain Sd197).